The following is a 625-amino-acid chain: DNA mismatch repair protein MutL (625 aa).

This sequence belongs to the DNA mismatch repair MutL/HexB family.

Its function is as follows. This protein is involved in the repair of mismatches in DNA. It is required for dam-dependent methyl-directed DNA mismatch repair. May act as a 'molecular matchmaker', a protein that promotes the formation of a stable complex between two or more DNA-binding proteins in an ATP-dependent manner without itself being part of a final effector complex. This is DNA mismatch repair protein MutL from Bacteroides fragilis (strain YCH46).